A 237-amino-acid chain; its full sequence is Phosphoribosylaminoimidazole-succinocarboxamide synthase (237 aa).

It belongs to the SAICAR synthetase family.

The catalysed reaction is 5-amino-1-(5-phospho-D-ribosyl)imidazole-4-carboxylate + L-aspartate + ATP = (2S)-2-[5-amino-1-(5-phospho-beta-D-ribosyl)imidazole-4-carboxamido]succinate + ADP + phosphate + 2 H(+). It functions in the pathway purine metabolism; IMP biosynthesis via de novo pathway; 5-amino-1-(5-phospho-D-ribosyl)imidazole-4-carboxamide from 5-amino-1-(5-phospho-D-ribosyl)imidazole-4-carboxylate: step 1/2. The polypeptide is Phosphoribosylaminoimidazole-succinocarboxamide synthase (Serratia proteamaculans (strain 568)).